An 834-amino-acid polypeptide reads, in one-letter code: Protein argonaute (834 aa).

Residues 210–326 enclose the PAZ domain; the sequence is SLLQILMEYT…LPIEFCFVVK (117 aa). Residues 500–799 form the Piwi domain; it reads YLFFILDKNS…VSNLARYQDV (300 aa).

It belongs to the argonaute family. Ago subfamily. In terms of assembly, ago1, chp1 and tas3 interact to form the core of the RNA-induced transcriptional silencing (RITS) complex. The RITS complex interacts with the RDRC complex via interaction between ago1 and hrr1. Clr4 has a role in mediating this interaction. Component of the argonaute siRNA chaperone (ARC) complex composed of ago1, arb1 and arb2. Interacts with arb1.

The protein localises to the cytoplasm. Its subcellular location is the nucleus. The protein resides in the chromosome. It localises to the centromere. It is found in the telomere. Its function is as follows. Required for G1 arrest and mating in response to nitrogen starvation. Ago1 regulation of cytokinesis and cell cycle checkpoints occurs downstream of dcr1. Required, indirectly, for regulated hyperphosphorylation of cdc2. Has a role in the RNA interference (RNAi) pathway which is important for heterochromatin formation, accurate chromosome segregation, centromere cohesion and telomere function during mitosis and meiosis. Required for silencing at the centromeres and for initiation of transcriptionally silent heterochromatin at the mating type locus. Promotes histone H3K9 methylation necessary for centromere function. Required for recruitment of swi6 and cohesin to an ectopic dg repeat. A member of the RNA-induced transcriptional silencing (RITS) complex which is involved in the biosynthesis of dsRNA from primer siRNAs provided by the RNA-directed RNA polymerase (RDRC) complex. Has ribonuclease H-like cleavage (slicing) activity towards target messages complementary to siRNA and can direct site-specific cleavage of RNA substrates via siRNA. Slicing activity is required for both post-transcriptional and transcriptional gene silencing as well as for histone H3 'Lys-10' methylation spreading, conversion of double-stranded siRNA to single-stranded siRNA and siRNA-dependent association of ago1 with chromatin. A member of the argonaute siRNA chaperone (ARC) complex which is required for histone H3K9 methylation, heterochromatin assembly and siRNA generation. The ARC complex contains mostly double-stranded siRNA. In Schizosaccharomyces pombe (strain 972 / ATCC 24843) (Fission yeast), this protein is Protein argonaute (ago1).